A 156-amino-acid polypeptide reads, in one-letter code: MPRRRVVGQRKILPDPKFNSELLAKFINVIMQDGKKSTAEKIIYKALDVVAEKKGEEHLVILEAALDNVRPTVEVKSRRVGGSTYQVPCEVRPVRRNALAMRWLVEAARKRGEKSMALRLAGEMLDAAENKGTAVKKREDVHRMAEANKAFAHYRW.

This sequence belongs to the universal ribosomal protein uS7 family. As to quaternary structure, part of the 30S ribosomal subunit. Contacts proteins S9 and S11.

Its function is as follows. One of the primary rRNA binding proteins, it binds directly to 16S rRNA where it nucleates assembly of the head domain of the 30S subunit. Is located at the subunit interface close to the decoding center, probably blocks exit of the E-site tRNA. This Shewanella loihica (strain ATCC BAA-1088 / PV-4) protein is Small ribosomal subunit protein uS7.